Reading from the N-terminus, the 313-residue chain is Glucan 1,3-beta-glucosidase (313 aa).

Residues 1 to 23 (MRFSTTLATAATALFFTASQVSA) form the signal peptide. The Proton donor role is filled by Glu-124. N-linked (GlcNAc...) asparagine glycosylation is present at Asn-202. The Nucleophile role is filled by Glu-233. Asn-284 carries N-linked (GlcNAc...) asparagine glycosylation.

Belongs to the glycosyl hydrolase 17 family.

The protein resides in the secreted. It is found in the cell wall. The enzyme catalyses Successive hydrolysis of beta-D-glucose units from the non-reducing ends of (1-&gt;3)-beta-D-glucans, releasing alpha-glucose.. Glucanases possibly play a role in cell expansion during growth, in cell-cell fusion during mating, and in spore release during sporulation. This enzyme may be involved in beta-glucan degradation and also function biosynthetically as a transglycosylase. This is Glucan 1,3-beta-glucosidase (BGL2) from Saccharomyces cerevisiae (strain ATCC 204508 / S288c) (Baker's yeast).